Reading from the N-terminus, the 536-residue chain is DNA damage-binding protein CMR1 (536 aa).

Basic and acidic residues predominate over residues 36 to 45 (REAGVDDTHR). The segment at 36–72 (REAGVDDTHRTVVKKKKSPSVSRGRSASPKVAPVATR) is disordered. WD repeat units lie at residues 195 to 236 (LVYE…LSEN), 251 to 291 (FFTK…SNDI), 346 to 386 (LSDK…KKPE), 403 to 442 (DSRL…LPDD), 456 to 495 (GRWT…LAHL), and 496 to 535 (PTAT…KEEE).

The protein belongs to the WD repeat DDB2/WDR76 family.

Functionally, DNA-binding protein that binds to both single- and double-stranded DNA. Binds preferentially to UV-damaged DNA. May be involved in DNA-metabolic processes. In Vanderwaltozyma polyspora (strain ATCC 22028 / DSM 70294 / BCRC 21397 / CBS 2163 / NBRC 10782 / NRRL Y-8283 / UCD 57-17) (Kluyveromyces polysporus), this protein is DNA damage-binding protein CMR1.